The following is a 158-amino-acid chain: Toxin Tse2 (158 aa).

Forms a heterotetramer with Tsi2 consisting of two Tse2 dimers and two Tsi2 dimers. Formation of the complex inactivates Tse2 enzymatic activity.

It is found in the secreted. Toxin secreted by the H1 type VI (H1-T6SS) secretion system into the cytoplasm of recipient cells. Acts likely as a NAD-dependent cytotoxin towards both prokaryotic and eukaryotic cells. The chain is Toxin Tse2 from Pseudomonas aeruginosa (strain ATCC 15692 / DSM 22644 / CIP 104116 / JCM 14847 / LMG 12228 / 1C / PRS 101 / PAO1).